We begin with the raw amino-acid sequence, 230 residues long: Demethylmenaquinone methyltransferase (230 aa).

S-adenosyl-L-methionine is bound by residues Thr62, Asp80, 100–101 (DG), and Ser117.

Belongs to the class I-like SAM-binding methyltransferase superfamily. MenG/UbiE family.

It catalyses the reaction a 2-demethylmenaquinol + S-adenosyl-L-methionine = a menaquinol + S-adenosyl-L-homocysteine + H(+). The protein operates within quinol/quinone metabolism; menaquinone biosynthesis; menaquinol from 1,4-dihydroxy-2-naphthoate: step 2/2. Its function is as follows. Methyltransferase required for the conversion of demethylmenaquinol (DMKH2) to menaquinol (MKH2). In Corynebacterium urealyticum (strain ATCC 43042 / DSM 7109), this protein is Demethylmenaquinone methyltransferase.